A 417-amino-acid chain; its full sequence is Putative competence-damage inducible protein (417 aa).

It belongs to the CinA family.

The chain is Putative competence-damage inducible protein from Leuconostoc citreum (strain KM20).